A 484-amino-acid chain; its full sequence is ATP-dependent RNA helicase DHH1 (484 aa).

The disordered stretch occupies residues 1–27 (MSTQIEDQDWKSKLNIPKKDTRPQTED). The segment covering 8–25 (QDWKSKLNIPKKDTRPQT) has biased composition (basic and acidic residues). Residues 34–62 (NTFEDFYLKRELLMGIFEAGFEKPSPIQE) carry the Q motif motif. Residues 65 to 235 (IPVALAGRDI…VNHLHKPYEI (171 aa)) form the Helicase ATP-binding domain. 78–85 (AKNGTGKT) serves as a coordination point for ATP. The short motif at 183 to 186 (DEAD) is the DEAD box element. The region spanning 245 to 405 (GITQYYAFVE…AIPATIDKSL (161 aa)) is the Helicase C-terminal domain. The tract at residues 430 to 484 (QQQHMPLPPQQPIPNQQFGGMPQQYSPQQQQYQQYPPQGMAMPPQGIQMQQQPQF) is disordered. Low complexity predominate over residues 442–484 (IPNQQFGGMPQQYSPQQQQYQQYPPQGMAMPPQGIQMQQQPQF).

It belongs to the DEAD box helicase family. DDX6/DHH1 subfamily.

It is found in the cytoplasm. It localises to the P-body. The catalysed reaction is ATP + H2O = ADP + phosphate + H(+). In terms of biological role, ATP-dependent RNA helicase involved in mRNA turnover, and more specifically in mRNA decapping by activating the decapping enzyme DCP1. Is involved in G1/S DNA-damage checkpoint recovery, probably through the regulation of the translational status of a subset of mRNAs. May also have a role in translation and mRNA nuclear export. In Vanderwaltozyma polyspora (strain ATCC 22028 / DSM 70294 / BCRC 21397 / CBS 2163 / NBRC 10782 / NRRL Y-8283 / UCD 57-17) (Kluyveromyces polysporus), this protein is ATP-dependent RNA helicase DHH1 (DHH1).